The chain runs to 453 residues: Ribulose bisphosphate carboxylase large chain (453 aa).

Positions 1–2 (MS) are excised as a propeptide. Position 3 is an N-acetylproline (Pro-3). Lys-14 bears the N6,N6,N6-trimethyllysine mark. Residues Asn-123 and Thr-173 each contribute to the substrate site. Lys-175 serves as the catalytic Proton acceptor. Lys-177 contacts substrate. 3 residues coordinate Mg(2+): Lys-201, Asp-203, and Glu-204. The residue at position 201 (Lys-201) is an N6-carboxylysine. His-294 serves as the catalytic Proton acceptor. Arg-295, His-327, and Ser-379 together coordinate substrate.

It belongs to the RuBisCO large chain family. Type I subfamily. In terms of assembly, heterohexadecamer of 8 large chains and 8 small chains; disulfide-linked. The disulfide link is formed within the large subunit homodimers. Requires Mg(2+) as cofactor. In terms of processing, the disulfide bond which can form in the large chain dimeric partners within the hexadecamer appears to be associated with oxidative stress and protein turnover.

The protein localises to the plastid. The protein resides in the chloroplast. It carries out the reaction 2 (2R)-3-phosphoglycerate + 2 H(+) = D-ribulose 1,5-bisphosphate + CO2 + H2O. The enzyme catalyses D-ribulose 1,5-bisphosphate + O2 = 2-phosphoglycolate + (2R)-3-phosphoglycerate + 2 H(+). Functionally, ruBisCO catalyzes two reactions: the carboxylation of D-ribulose 1,5-bisphosphate, the primary event in carbon dioxide fixation, as well as the oxidative fragmentation of the pentose substrate in the photorespiration process. Both reactions occur simultaneously and in competition at the same active site. This is Ribulose bisphosphate carboxylase large chain from Hydnophytum formicarum (Ant plant).